Reading from the N-terminus, the 310-residue chain is tRNA dimethylallyltransferase (310 aa).

13 to 20 provides a ligand contact to ATP; it reads GPTASGKT. Residue 15 to 20 participates in substrate binding; the sequence is TASGKT. 4 interaction with substrate tRNA regions span residues 38–41, 162–166, 243–248, and 276–283; these read DSAL, QRLSR, RCVGYR, and KRQITWLR.

It belongs to the IPP transferase family. Monomer. Mg(2+) is required as a cofactor.

It carries out the reaction adenosine(37) in tRNA + dimethylallyl diphosphate = N(6)-dimethylallyladenosine(37) in tRNA + diphosphate. Its function is as follows. Catalyzes the transfer of a dimethylallyl group onto the adenine at position 37 in tRNAs that read codons beginning with uridine, leading to the formation of N6-(dimethylallyl)adenosine (i(6)A). This is tRNA dimethylallyltransferase from Vibrio atlanticus (strain LGP32) (Vibrio splendidus (strain Mel32)).